Reading from the N-terminus, the 310-residue chain is Ribosomal RNA small subunit methyltransferase H (310 aa).

S-adenosyl-L-methionine contacts are provided by residues 35-37 (GGH), D52, F79, D100, and Q107.

The protein belongs to the methyltransferase superfamily. RsmH family.

The protein resides in the cytoplasm. The catalysed reaction is cytidine(1402) in 16S rRNA + S-adenosyl-L-methionine = N(4)-methylcytidine(1402) in 16S rRNA + S-adenosyl-L-homocysteine + H(+). Functionally, specifically methylates the N4 position of cytidine in position 1402 (C1402) of 16S rRNA. In Anaeromyxobacter sp. (strain Fw109-5), this protein is Ribosomal RNA small subunit methyltransferase H.